The following is a 374-amino-acid chain: Lipoyl synthase, mitochondrial (374 aa).

The N-terminal 19 residues, 1 to 19, are a transit peptide targeting the mitochondrion; it reads MHSRSALLYRFLRPASRCF. Residues Cys103, Cys108, Cys114, Cys134, Cys138, Cys141, and Ser350 each coordinate [4Fe-4S] cluster. The 221-residue stretch at 119–339 folds into the Radical SAM core domain; the sequence is ETGTATATIM…RLLGMEMGFR (221 aa).

Belongs to the radical SAM superfamily. Lipoyl synthase family. Requires [4Fe-4S] cluster as cofactor. Expressed in leaves and flowers, but not in roots. Expressed in roots, rosette leaves, cauline leaves, stems, flowers and siliques.

The protein localises to the mitochondrion. It catalyses the reaction [[Fe-S] cluster scaffold protein carrying a second [4Fe-4S](2+) cluster] + N(6)-octanoyl-L-lysyl-[protein] + 2 oxidized [2Fe-2S]-[ferredoxin] + 2 S-adenosyl-L-methionine + 4 H(+) = [[Fe-S] cluster scaffold protein] + N(6)-[(R)-dihydrolipoyl]-L-lysyl-[protein] + 4 Fe(3+) + 2 hydrogen sulfide + 2 5'-deoxyadenosine + 2 L-methionine + 2 reduced [2Fe-2S]-[ferredoxin]. The protein operates within protein modification; protein lipoylation via endogenous pathway; protein N(6)-(lipoyl)lysine from octanoyl-[acyl-carrier-protein]: step 2/2. Its function is as follows. Catalyzes the radical-mediated insertion of two sulfur atoms into the C-6 and C-8 positions of the octanoyl moiety bound to the lipoyl domains of lipoate-dependent enzymes, thereby converting the octanoylated domains into lipoylated derivatives. Together with LIP2 is essential for mitochondrial protein lipoylation during seed development. Required for the lipoylation of mitochondrial pyruvate dehydrogenase component E2 proteins in leaves and roots. This Arabidopsis thaliana (Mouse-ear cress) protein is Lipoyl synthase, mitochondrial.